We begin with the raw amino-acid sequence, 423 residues long: Elongation factor 1-alpha (423 aa).

A tr-type G domain is found at 5–211; sequence KEHINLAFIG…DNLEPPEKPT (207 aa). The G1 stretch occupies residues 14–21; the sequence is GHVDHGKS. 14-21 contacts GTP; it reads GHVDHGKS. Serine 21 serves as a coordination point for Mg(2+). The G2 stretch occupies residues 60-64; that stretch reads GVTID. The interval 81-84 is G3; it reads DCPG. GTP is bound by residues 81–85 and 136–139; these read DCPGH and NKMD. The G4 stretch occupies residues 136-139; that stretch reads NKMD. The segment at 175 to 177 is G5; that stretch reads SAF.

Belongs to the TRAFAC class translation factor GTPase superfamily. Classic translation factor GTPase family. EF-Tu/EF-1A subfamily.

Its subcellular location is the cytoplasm. The catalysed reaction is GTP + H2O = GDP + phosphate + H(+). Its function is as follows. GTP hydrolase that promotes the GTP-dependent binding of aminoacyl-tRNA to the A-site of ribosomes during protein biosynthesis. In Methanopyrus kandleri (strain AV19 / DSM 6324 / JCM 9639 / NBRC 100938), this protein is Elongation factor 1-alpha.